The sequence spans 434 residues: Chaperone SurA (434 aa).

Residues 1–22 form the signal peptide; the sequence is MKPSKHLIFALFALAISQPTMA. PpiC domains follow at residues 173–274 and 283–383; these read DVEY…KIMD and IEEV…QLEE.

The protein resides in the periplasm. It catalyses the reaction [protein]-peptidylproline (omega=180) = [protein]-peptidylproline (omega=0). Chaperone involved in the correct folding and assembly of outer membrane proteins. Recognizes specific patterns of aromatic residues and the orientation of their side chains, which are found more frequently in integral outer membrane proteins. May act in both early periplasmic and late outer membrane-associated steps of protein maturation. The sequence is that of Chaperone SurA from Shewanella sp. (strain MR-4).